The primary structure comprises 219 residues: Imidazole glycerol phosphate synthase subunit HisH (219 aa).

The 217-residue stretch at 2-218 (KVVVIDSGTG…MVWTPEGTSG (217 aa)) folds into the Glutamine amidotransferase type-1 domain. Residue Cys-87 is the Nucleophile of the active site. Residues His-193 and Glu-195 contribute to the active site.

In terms of assembly, heterodimer of HisH and HisF.

The protein localises to the cytoplasm. The catalysed reaction is 5-[(5-phospho-1-deoxy-D-ribulos-1-ylimino)methylamino]-1-(5-phospho-beta-D-ribosyl)imidazole-4-carboxamide + L-glutamine = D-erythro-1-(imidazol-4-yl)glycerol 3-phosphate + 5-amino-1-(5-phospho-beta-D-ribosyl)imidazole-4-carboxamide + L-glutamate + H(+). It catalyses the reaction L-glutamine + H2O = L-glutamate + NH4(+). It functions in the pathway amino-acid biosynthesis; L-histidine biosynthesis; L-histidine from 5-phospho-alpha-D-ribose 1-diphosphate: step 5/9. IGPS catalyzes the conversion of PRFAR and glutamine to IGP, AICAR and glutamate. The HisH subunit catalyzes the hydrolysis of glutamine to glutamate and ammonia as part of the synthesis of IGP and AICAR. The resulting ammonia molecule is channeled to the active site of HisF. The chain is Imidazole glycerol phosphate synthase subunit HisH from Granulibacter bethesdensis (strain ATCC BAA-1260 / CGDNIH1).